The chain runs to 552 residues: Chaperonin GroEL 3 (552 aa).

ATP-binding positions include 30–33 (TLGP), lysine 51, 87–91 (DGTTT), glycine 415, and aspartate 495.

The protein belongs to the chaperonin (HSP60) family. Forms a cylinder of 14 subunits composed of two heptameric rings stacked back-to-back. Interacts with the co-chaperonin GroES.

The protein localises to the cytoplasm. The enzyme catalyses ATP + H2O + a folded polypeptide = ADP + phosphate + an unfolded polypeptide.. Functionally, together with its co-chaperonin GroES, plays an essential role in assisting protein folding. The GroEL-GroES system forms a nano-cage that allows encapsulation of the non-native substrate proteins and provides a physical environment optimized to promote and accelerate protein folding. In Mesorhizobium japonicum (strain LMG 29417 / CECT 9101 / MAFF 303099) (Mesorhizobium loti (strain MAFF 303099)), this protein is Chaperonin GroEL 3.